The chain runs to 72 residues: MGKQPVKLKAVVYALSPFQQKIMTGLWKDLPEKIHHKVSENWISTILLVAPVVGTYSYAQYFKEQEKLEHRF.

Residues 1–41 (MGKQPVKLKAVVYALSPFQQKIMTGLWKDLPEKIHHKVSEN) lie on the Mitochondrial matrix side of the membrane. The helical transmembrane segment at 42–58 (WISTILLVAPVVGTYSY) threads the bilayer. Over 59 to 72 (AQYFKEQEKLEHRF) the chain is Mitochondrial intermembrane.

Belongs to the UQCRQ/QCR8 family. In terms of assembly, component of the ubiquinol-cytochrome c oxidoreductase (cytochrome b-c1 complex, complex III, CIII), a multisubunit enzyme composed of 10 subunits. The complex is composed of 3 respiratory subunits cytochrome b (MT-CYB), cytochrome c1 (CYC1-1 or CYC1-2) and Rieske protein (UCR1-1 or UCR1-2), 2 core protein subunits MPPalpha1 (or MPPalpha2) and MPPB, and 5 low-molecular weight protein subunits QCR7-1 (or QCR7-2), UCRQ-1 (or UCRQ-2), QCR9, UCRY and probably QCR6-1 (or QCR6-2). The complex exists as an obligatory dimer and forms supercomplexes (SCs) in the inner mitochondrial membrane with NADH-ubiquinone oxidoreductase (complex I, CI), resulting in different assemblies (supercomplexes SCI(1)III(2) and SCI(2)III(4)).

Its subcellular location is the mitochondrion inner membrane. In terms of biological role, component of the ubiquinol-cytochrome c oxidoreductase, a multisubunit transmembrane complex that is part of the mitochondrial electron transport chain which drives oxidative phosphorylation. The respiratory chain contains 3 multisubunit complexes succinate dehydrogenase (complex II, CII), ubiquinol-cytochrome c oxidoreductase (cytochrome b-c1 complex, complex III, CIII) and cytochrome c oxidase (complex IV, CIV), that cooperate to transfer electrons derived from NADH and succinate to molecular oxygen, creating an electrochemical gradient over the inner membrane that drives transmembrane transport and the ATP synthase. The cytochrome b-c1 complex catalyzes electron transfer from ubiquinol to cytochrome c, linking this redox reaction to translocation of protons across the mitochondrial inner membrane, with protons being carried across the membrane as hydrogens on the quinol. In the process called Q cycle, 2 protons are consumed from the matrix, 4 protons are released into the intermembrane space and 2 electrons are passed to cytochrome c. This is Cytochrome b-c1 complex subunit 8-2, mitochondrial (UCRQ-2) from Arabidopsis thaliana (Mouse-ear cress).